We begin with the raw amino-acid sequence, 438 residues long: EF-hand calcium-binding domain-containing protein 3 (438 aa).

2 consecutive EF-hand domains span residues 47 to 82 and 83 to 118; these read SQMR…LGMN and LTKH…KNRF. Residues D96, D98, D100, K102, and D107 each coordinate Ca(2+). A Phosphotyrosine modification is found at Y279. Positions 413 to 438 are disordered; the sequence is SSSDISECDTDTGRKRKRKGFKGFRQ. Positions 426–438 are enriched in basic residues; it reads RKRKRKGFKGFRQ.

The polypeptide is EF-hand calcium-binding domain-containing protein 3 (EFCAB3) (Bos taurus (Bovine)).